The chain runs to 1534 residues: Activating signal cointegrator 1 complex subunit 3 (1534 aa).

Residues 83–267 (ETAYNTNENL…FLHVNPFIGL (185 aa)) form the Helicase ATP-binding 1 domain. 96 to 103 (APTGAGKT) is an ATP binding site. The DEVH box signature appears at 209–212 (DEVH). The Helicase C-terminal 1 domain maps to 294–500 (QLHDMEEVCY…SLADNLNAEI (207 aa)). Positions 576 to 849 (STDLGRTASH…GSEAVCIINF (274 aa)) constitute an SEC63 1 domain. One can recognise a Helicase ATP-binding 2 domain in the interval 898–1073 (HTLYHTDTNV…WLGIGQVGLF (176 aa)). Position 911-918 (911-918 (APTGSGKT)) interacts with ATP. Positions 1015–1018 (DEIH) match the DEIH box motif. The Helicase C-terminal 2 domain maps to 1106-1313 (PVFQAIRTHS…GTVTSKQDAM (208 aa)). The 108-residue stretch at 1374–1481 (PLTYGRISSY…TLPHIQKQEL (108 aa)) folds into the SEC63 2 domain.

It belongs to the helicase family.

It localises to the nucleus. The protein resides in the nucleus speckle. Its subcellular location is the cytoplasm. It is found in the cytosol. It carries out the reaction Couples ATP hydrolysis with the unwinding of duplex DNA by translocating in the 3'-5' direction.. It catalyses the reaction ATP + H2O = ADP + phosphate + H(+). Functionally, 3'-5' DNA helicase involved in repair of alkylated DNA. Promotes DNA unwinding to generate single-stranded substrate needed for alkbh3, enabling alkbh3 to process alkylated N3-methylcytosine (3mC) within double-stranded regions. Also involved in activation of the ribosome quality control (RQC) pathway, a pathway that degrades nascent peptide chains during problematic translation. Drives the splitting of stalled ribosomes. The protein is Activating signal cointegrator 1 complex subunit 3 (ascc3) of Danio rerio (Zebrafish).